The following is a 349-amino-acid chain: Protein Wnt-7b (349 aa).

The N-terminal stretch at 1 to 24 (MHRNFRKWIFYVFLCFGVLYVKLG) is a signal peptide. Disulfide bonds link Cys73–Cys84, Cys123–Cys131, Cys133–Cys152, Cys200–Cys214, and Cys202–Cys209. N-linked (GlcNAc...) asparagine glycans are attached at residues Asn83 and Asn127. A lipid anchor (O-palmitoleoyl serine; by PORCN) is attached at Ser206. The segment at 238-266 (VEVVRASRLRQPTFLRIKQLRSYQKPMET) is disordered linker. Intrachain disulfides connect Cys278–Cys309, Cys294–Cys304, Cys308–Cys348, Cys324–Cys339, Cys326–Cys336, and Cys331–Cys332. N-linked (GlcNAc...) asparagine glycosylation occurs at Asn295.

Belongs to the Wnt family. As to quaternary structure, forms a soluble 1:1 complex with AFM; this prevents oligomerization and is required for prolonged biological activity. The complex with AFM may represent the physiological form in body fluids. Interacts with FZD1 and FZD10. Interacts with FZD4 (in vitro). Interacts with PORCN. Interacts with glypican GPC3. Interacts (via intrinsically disordered linker region) with RECK; interaction with RECK confers ligand selectivity for Wnt7 in brain endothelial cells and allows these cells to selectively respond to Wnt7. Palmitoleoylation is required for efficient binding to frizzled receptors. Depalmitoleoylation leads to Wnt signaling pathway inhibition. In terms of tissue distribution, moderately expressed in fetal brain, weakly expressed in fetal lung and kidney, and faintly expressed in adult brain, lung and prostate.

It localises to the secreted. The protein localises to the extracellular space. The protein resides in the extracellular matrix. Functionally, ligand for members of the frizzled family of seven transmembrane receptors that functions in the canonical Wnt/beta-catenin signaling pathway. Required for normal fusion of the chorion and the allantois during placenta development. Required for central nervous system (CNS) angiogenesis and blood-brain barrier regulation. The protein is Protein Wnt-7b (WNT7B) of Homo sapiens (Human).